The sequence spans 157 residues: Ribosome maturation factor RimP (157 aa).

Belongs to the RimP family.

It is found in the cytoplasm. In terms of biological role, required for maturation of 30S ribosomal subunits. The sequence is that of Ribosome maturation factor RimP from Helicobacter hepaticus (strain ATCC 51449 / 3B1).